A 362-amino-acid polypeptide reads, in one-letter code: Alpha-tubulin N-acetyltransferase (362 aa).

Residues 1-177 (MQFGCNVAEA…NNFLMLDASI (177 aa)) enclose the N-acetyltransferase domain. Acetyl-CoA-binding positions include 111 to 124 (FYTH…GIGT) and 147 to 156 (SPKLLAFLSK).

It belongs to the acetyltransferase ATAT1 family.

It catalyses the reaction L-lysyl-[alpha-tubulin] + acetyl-CoA = N(6)-acetyl-L-lysyl-[alpha-tubulin] + CoA + H(+). Specifically acetylates 'Lys-40' in alpha-tubulin on the lumenal side of microtubules. Promotes microtubule destabilization and accelerates microtubule dynamics; this activity may be independent of acetylation activity. Acetylates alpha-tubulin with a slow enzymatic rate, due to a catalytic site that is not optimized for acetyl transfer. Enters the microtubule through each end and diffuses quickly throughout the lumen of microtubules. Acetylates only long/old microtubules because of its slow acetylation rate since it does not have time to act on dynamically unstable microtubules before the enzyme is released. The chain is Alpha-tubulin N-acetyltransferase from Giardia intestinalis (strain ATCC 50803 / WB clone C6) (Giardia lamblia).